A 293-amino-acid chain; its full sequence is MTEPNSEPAAVAPLMGATDIRRLAEEIGVRPTKTLGQNFVIDGNTIRRIVAAAAIGDDETVLEVGPGLGSLTLGLLDAAKAVVAVEIDPVLAEKLPETVRAWRPGAEENFHLVLSDAMKVTELPLPPTALVANLPYNVAVPVVLHLLQHFPSLQHGLVMVQDEVADRLAATPGSKIYGVPSVKAAWYGHMRKAGVIGMNVFWPAPKIHSGLVAFTRHDPPETHATREQVFAVIDAAFAQRRKTLRAALAGWAGSASEAERCLVAAGLDPTARGEVLDINAYVKIAEARHPVDA.

6 residues coordinate S-adenosyl-L-methionine: Asn-38, Val-40, Gly-65, Glu-86, Asp-116, and Asn-133.

Belongs to the class I-like SAM-binding methyltransferase superfamily. rRNA adenine N(6)-methyltransferase family. RsmA subfamily.

It localises to the cytoplasm. It carries out the reaction adenosine(1518)/adenosine(1519) in 16S rRNA + 4 S-adenosyl-L-methionine = N(6)-dimethyladenosine(1518)/N(6)-dimethyladenosine(1519) in 16S rRNA + 4 S-adenosyl-L-homocysteine + 4 H(+). Specifically dimethylates two adjacent adenosines (A1518 and A1519) in the loop of a conserved hairpin near the 3'-end of 16S rRNA in the 30S particle. May play a critical role in biogenesis of 30S subunits. This chain is Ribosomal RNA small subunit methyltransferase A, found in Paenarthrobacter aurescens (strain TC1).